A 219-amino-acid chain; its full sequence is Histone H1.4 (219 aa).

Low complexity predominate over residues 1–15; sequence MSETAPAAPAAPAPA. A disordered region spans residues 1 to 41; it reads MSETAPAAPAAPAPAEKTPIKKKARKAAGGAKRKASGPPVS. Residue S2 is modified to N-acetylserine. Residue S2 is modified to Phosphoserine. Residue K17 is modified to N6-acetyllysine. Phosphothreonine is present on T18. Positions 20–35 are enriched in basic residues; that stretch reads IKKKARKAAGGAKRKA. Residue K26 is modified to N6-acetyllysine; alternate. K26 is modified (N6-methyllysine; alternate). K34 carries the post-translational modification N6-(beta-hydroxybutyryl)lysine; alternate. K34 carries the post-translational modification N6-succinyllysine; alternate. Phosphoserine is present on S36. Positions 36–109 constitute an H15 domain; the sequence is SGPPVSELIT…GASGSFKLNK (74 aa). K52 is subject to N6-(beta-hydroxybutyryl)lysine. Citrulline is present on R54. Residues K64, K85, K90, and K106 each carry the N6-(beta-hydroxybutyryl)lysine modification. The interval 92-219 is disordered; it reads TLVQTKGTGA…KPKKTAAKKK (128 aa). Residues 119–140 are compositionally biased toward basic residues; sequence KAKKAGAAKAKKPAGAAKKPKK. T146 is modified (phosphothreonine). 2 stretches are compositionally biased toward basic residues: residues 149-160 and 168-185; these read KSTKKTPKKAKK and KKAK…KKAP. S150 is modified (ADP-ribosylserine). A Phosphoserine modification is found at S187. Residues 192–219 show a composition bias toward basic residues; sequence RAVKPKAAKPKTSKPKAAKPKKTAAKKK.

Belongs to the histone H1/H5 family. In terms of processing, H1 histones are progressively phosphorylated during the cell cycle, becoming maximally phosphorylated during late G2 phase and M phase, and being dephosphorylated sharply thereafter. Post-translationally, acetylated at Lys-26. Deacetylated at Lys-26 by SIRT1. Citrullination at Arg-54 (H1R54ci) by PADI4 takes place within the DNA-binding site of H1 and results in its displacement from chromatin and global chromatin decondensation, thereby promoting pluripotency and stem cell maintenance. In terms of processing, ADP-ribosylated on Ser-150 in response to DNA damage.

It is found in the nucleus. The protein localises to the chromosome. In terms of biological role, histone H1 protein binds to linker DNA between nucleosomes forming the macromolecular structure known as the chromatin fiber. Histones H1 are necessary for the condensation of nucleosome chains into higher-order structured fibers. Also acts as a regulator of individual gene transcription through chromatin remodeling, nucleosome spacing and DNA methylation. The polypeptide is Histone H1.4 (Rattus norvegicus (Rat)).